We begin with the raw amino-acid sequence, 3797 residues long: A-kinase anchor protein 9 (3797 aa).

A disordered region spans residues 1–140 (MEDEERQRKL…SSEQGAQSSQ (140 aa)). Polar residues-rich tracts occupy residues 50–65 (HTDQ…SSQR) and 92–108 (EIST…NGCN). Basic and acidic residues predominate over residues 115 to 124 (KPTDPLREEE). Ser-139 bears the Phosphoserine mark. Coiled coils occupy residues 140–607 (QTCL…LRTQ) and 640–976 (IHYK…LLAN). Residue Ser-1288 is modified to Phosphoserine. Disordered stretches follow at residues 1643-1668 (STQT…LERS), 2323-2343 (VVST…EESF), and 2419-2454 (SDNL…ASRT). 2 stretches are compositionally biased toward basic and acidic residues: residues 1648–1668 (DGHD…LERS) and 2328–2343 (QQRE…EESF). Positions 1808–2377 (SRLQAAVEKL…MTHMNNVLKE (570 aa)) form a coiled coil. Over residues 2438–2454 (KQTSLTRLQESPEASRT) the composition is skewed to polar residues. A PKA-RII subunit binding domain region spans residues 2498 to 2510 (DLQRSLEKFAAAL). Disordered stretches follow at residues 2604–2695 (LEEA…SSSG) and 3271–3296 (MEKD…QKKM). Residues 2606 to 2615 (EAEERPEEGG) are compositionally biased toward acidic residues. A compositionally biased stretch (basic and acidic residues) spans 2642 to 2669 (PLTEAKEKLSYSLEKEKRTGEQESREAP). Residues 2975–3325 (LQKADRRSLL…QVYKLDLEGK (351 aa)) adopt a coiled-coil conformation. Over residues 3279-3294 (QKTLQTEQEANTQGQK) the composition is skewed to polar residues. 3 positions are modified to phosphoserine: Ser-3732, Ser-3755, and Ser-3787.

As to quaternary structure, interacts with the regulatory region of protein kinase N (PKN), protein phosphatase 2A (PP2A), protein phosphatase 1 (PP1) and the immature non-phosphorylated form of PKC epsilon. Interacts with CIP4 and FNBP1. Interacts with chloride intracellular channel proteins CLIC1, CLIC4 and CLIC5. CSNK1D binding promotes its centrosomal subcellular location. Interacts with GM130/GOLGA2; leading to recruitment to the Golgi apparatus. Interacts with KCNQ1; targets protein kinase A (PKA) catalytic and regulatory subunits and protein phosphatase 1 (PP1), to the heterodimer KCNQ1-KCNE1. Interacts with PDE4DIP isoform 2; this interaction stabilizes both proteins. In complex with PDE4DIP isoform 2, recruits CAMSAP2 to the Golgi apparatus. Forms a pericentrosomal complex with CDK5RAP2, EB1/MAPRE1 and PDE4DIP isoform 2; within this complex, MAPRE1 binding to CDK5RAP2 may be mediated by PDE4DIP. Interacts with MAPRE1 and MAPRE3. Interacts (via C-terminus) with CAMSAP2; this interaction is much stronger in the presence of PDE4DIP isoform 2. Interacts with CAMSAP3. Interacts (via C-terminus) with the gamma-tubulin ring complex (gamma-TuRC), composed of gamma-tubulin, TUBGCP2, TUBGCP3, TUBGCP4, TUBGCP5 and TUBGCP6.

The protein localises to the golgi apparatus. Its subcellular location is the cytoplasm. The protein resides in the cytoskeleton. It is found in the microtubule organizing center. It localises to the centrosome. In terms of biological role, scaffolding protein that assembles several protein kinases and phosphatases on the centrosome and Golgi apparatus. Required to maintain the integrity of the Golgi apparatus. Required for microtubule nucleation at the cis-side of the Golgi apparatus. Required for association of the centrosomes with the poles of the bipolar mitotic spindle during metaphase. In complex with PDE4DIP isoform 2/MMG8/SMYLE, recruits CAMSAP2 to the Golgi apparatus and tethers non-centrosomal minus-end microtubules to the Golgi, an important step for polarized cell movement. In complex with PDE4DIP isoform 2, EB1/MAPRE1 and CDK5RAP2, contributes to microtubules nucleation and extension also from the centrosome to the cell periphery. This Mus musculus (Mouse) protein is A-kinase anchor protein 9 (Akap9).